We begin with the raw amino-acid sequence, 150 residues long: Viral late gene transcription factor 2 (150 aa).

This sequence belongs to the orthopoxvirus VLTF-2/OPG126 family. Interacts with itself. Interacts with the late transcription factors VLTF-1/OPG093.

In terms of biological role, acts with RNA polymerase to initiate transcription from late gene promoters. The chain is Viral late gene transcription factor 2 (OPG126) from Vaccinia virus (strain Western Reserve) (VACV).